Consider the following 229-residue polypeptide: Protein ras-2 (229 aa).

Position 15–22 (15–22) interacts with GTP; sequence GDGGVGKT. The Effector region signature appears at 37-45; the sequence is YDPTIEDSY. 62-66 is a GTP binding site; the sequence is DTAGQ. A disordered region spans residues 109 to 132; that stretch reads KESTSSPSAYPGSSPLAATNPSAP. Residues 111 to 126 show a composition bias toward low complexity; sequence STSSPSAYPGSSPLAA. GTP is bound at residue 140 to 143; it reads NKSD. A disordered region spans residues 188-229; that stretch reads LRKQRQQGQSTPRALPPSGNSKSEKYSGTEKPKRPRGKCLII. Residues 209–219 are compositionally biased toward basic and acidic residues; it reads KSEKYSGTEKP. Positions 220-229 are enriched in basic residues; that stretch reads KRPRGKCLII. At cysteine 226 the chain carries Cysteine methyl ester. Cysteine 226 is lipidated: S-farnesyl cysteine. Positions 227–229 are cleaved as a propeptide — removed in mature form; it reads LII.

The protein belongs to the small GTPase superfamily. Ras family.

It localises to the cell membrane. It catalyses the reaction GTP + H2O = GDP + phosphate + H(+). Functionally, ras proteins bind GDP/GTP and possess intrinsic GTPase activity. The chain is Protein ras-2 (ras-2) from Neurospora crassa (strain ATCC 24698 / 74-OR23-1A / CBS 708.71 / DSM 1257 / FGSC 987).